The chain runs to 389 residues: UDP-N-acetylglucosamine--N-acetylmuramyl-(pentapeptide) pyrophosphoryl-undecaprenol N-acetylglucosamine transferase (389 aa).

Residues 39–41 (TGG), Asn-157, Arg-193, Ser-221, Ile-275, 294–299 (ALTVSE), and Gln-320 contribute to the UDP-N-acetyl-alpha-D-glucosamine site.

Belongs to the glycosyltransferase 28 family. MurG subfamily.

It is found in the cell inner membrane. It carries out the reaction di-trans,octa-cis-undecaprenyl diphospho-N-acetyl-alpha-D-muramoyl-L-alanyl-D-glutamyl-meso-2,6-diaminopimeloyl-D-alanyl-D-alanine + UDP-N-acetyl-alpha-D-glucosamine = di-trans,octa-cis-undecaprenyl diphospho-[N-acetyl-alpha-D-glucosaminyl-(1-&gt;4)]-N-acetyl-alpha-D-muramoyl-L-alanyl-D-glutamyl-meso-2,6-diaminopimeloyl-D-alanyl-D-alanine + UDP + H(+). Its pathway is cell wall biogenesis; peptidoglycan biosynthesis. Its function is as follows. Cell wall formation. Catalyzes the transfer of a GlcNAc subunit on undecaprenyl-pyrophosphoryl-MurNAc-pentapeptide (lipid intermediate I) to form undecaprenyl-pyrophosphoryl-MurNAc-(pentapeptide)GlcNAc (lipid intermediate II). In Saccharophagus degradans (strain 2-40 / ATCC 43961 / DSM 17024), this protein is UDP-N-acetylglucosamine--N-acetylmuramyl-(pentapeptide) pyrophosphoryl-undecaprenol N-acetylglucosamine transferase.